Consider the following 160-residue polypeptide: Photosystem I reaction center subunit XI (160 aa).

The next 2 membrane-spanning stretches (helical) occupy residues leucine 84–valine 104 and phenylalanine 125–glutamate 145.

Belongs to the PsaL family.

The protein localises to the cellular thylakoid membrane. This chain is Photosystem I reaction center subunit XI, found in Microcystis aeruginosa (strain NIES-843 / IAM M-2473).